We begin with the raw amino-acid sequence, 390 residues long: Putative gustatory receptor 59d (390 aa).

Residues 1–38 lie on the Cytoplasmic side of the membrane; that stretch reads MADLLKLCLRIAYAYGRLTGVINFKIDLKTGQALVTRG. Residues 39-59 traverse the membrane as a helical segment; it reads ATLISVSTHLLIFALLLYQTM. Over 60–75 the chain is Extracellular; that stretch reads RKSVVNVMWKYANSLH. The chain crosses the membrane as a helical span at residues 76-96; sequence EYVFLVIAGFRVVCVFLELVS. Residues 97-128 lie on the Cytoplasmic side of the membrane; the sequence is RWSQRRTFVRLFNSFRRLYQRNPDIIQYCRRS. The chain crosses the membrane as a helical span at residues 129–149; that stretch reads IVSKFFCVTMTETLHIIVTLA. At 150-156 the chain is on the extracellular side; it reads MMRNRLS. Residues 157–177 traverse the membrane as a helical segment; that stretch reads IALALRIWAVLSLTAIINVII. Topologically, residues 178 to 252 are cytoplasmic; the sequence is TQYYVATACV…NLSTAYEGEV (75 aa). Residues 253 to 273 form a helical membrane-spanning segment; it reads VCLVITYYLNMLGTSYLLFSI. Over 274-283 the chain is Extracellular; sequence SKYGNFGNNL. A helical transmembrane segment spans residues 284–304; sequence LVIITLCGIVYFVFYVVDCWI. The Cytoplasmic segment spans residues 305–366; sequence NAFNVFYLLD…MYGLFEFGRG (62 aa). The helical transmembrane segment at 367-383 threads the bilayer; sequence TSFAVFNSLLTHSLLLI. Residues 384-390 lie on the Extracellular side of the membrane; the sequence is QYDVQNF.

This sequence belongs to the insect chemoreceptor superfamily. Gustatory receptor (GR) family. Gr22e subfamily. Expressed in the adult labellar chemosensory neurons. In larvae, is expressed in neurons of the terminal external chemosensory organ as well as in the dorsal pharyngeal sense organ.

It localises to the cell membrane. Probable gustatory receptor which mediates acceptance or avoidance behavior, depending on its substrates. This chain is Putative gustatory receptor 59d (Gr59d), found in Drosophila melanogaster (Fruit fly).